Reading from the N-terminus, the 273-residue chain is Nitrogenase iron protein 5 (273 aa).

ATP is bound at residue 8–15; that stretch reads GKGGIGKS. A [4Fe-4S] cluster-binding site is contributed by Cys-94. Position 97 is an ADP-ribosylarginine; by dinitrogenase reductase ADP-ribosyltransferase (Arg-97). A [4Fe-4S] cluster-binding site is contributed by Cys-129.

This sequence belongs to the NifH/BchL/ChlL family. In terms of assembly, homodimer. [4Fe-4S] cluster serves as cofactor. In terms of processing, the reversible ADP-ribosylation of Arg-97 inactivates the nitrogenase reductase and regulates nitrogenase activity.

The enzyme catalyses N2 + 8 reduced [2Fe-2S]-[ferredoxin] + 16 ATP + 16 H2O = H2 + 8 oxidized [2Fe-2S]-[ferredoxin] + 2 NH4(+) + 16 ADP + 16 phosphate + 6 H(+). In terms of biological role, the key enzymatic reactions in nitrogen fixation are catalyzed by the nitrogenase complex, which has 2 components: the iron protein and the molybdenum-iron protein. This chain is Nitrogenase iron protein 5 (nifH5), found in Clostridium pasteurianum.